A 30-amino-acid chain; its full sequence is Kalata-B17 (30 aa).

Residues 1 to 30 (GIPCAESCVYIPCTITALLGCKCKDQVCYN) constitute a cross-link (cyclopeptide (Gly-Asn)). Cystine bridges form between cysteine 4–cysteine 21, cysteine 8–cysteine 23, and cysteine 13–cysteine 28.

In terms of processing, this is a cyclic peptide.

In terms of biological role, probably participates in a plant defense mechanism. This Oldenlandia affinis protein is Kalata-B17.